A 646-amino-acid polypeptide reads, in one-letter code: MEGAEKVKVVVRCRPISTTEKLQGHKIAVTCNDEEKAVNIKSLSQEDPPRTFYFDAVFSPNTDQMTVYNVAARPIVENVLKGYNGTIFAYGQTGTGKTFTMAGDLEPVEMRGIIPNSFAHIFDHIAKCQHDTTFLVRVSYLEIYNEEIRDLLSKDHNGNLEIKERPDVGVYVRNLSNPTVENASKMQALMEFGSKNRKVGATAMNLESSRSHAMFTVTIESCRNGLVTQGKLQLVDLAGSERQSKTGAQGERLKEAAKINLSLSTLGNVISSLVDGKSTHIPYRNSKLTRLLQDSLGGNSKTVMIANVGPATYNYDETLSTLRYANRAKNIQNVAKINEDPKDAQLRKFQLEIEALRKILDEENPGDDENQEEAWEAKMQEREVEMEKKRKILEERVNSAVNDEETHRLVKEMMENEAELKKARSEHEKLRSKLEKIEKKLIVGGENLLEKVEEQAKLLEVNNKELEQSKFQEAHLRTQLEERTAVKVEIEERYSSLQEEAFVKSKKIKKVSNELKDARAELKDLEEDHQRQVEAMLDDIRQLRKELLLNIAIIDEYIPVEHVELIEKYVSWSEEHGDWQLKAIAYTGNNMRASAPPAKKEFSNNNQTVPMYYSYRADLGASTAEHRPRTSSKKHRASIRLQQLLT.

The Kinesin motor domain occupies 6 to 331 (KVKVVVRCRP…LRYANRAKNI (326 aa)). 91–98 (GQTGTGKT) contacts ATP. The stretch at 342–552 (KDAQLRKFQL…LRKELLLNIA (211 aa)) forms a coiled coil. The segment at 525-550 (LEEDHQRQVEAMLDDIRQLRKELLLN) is interaction with klp-11. The disordered stretch occupies residues 623-646 (TAEHRPRTSSKKHRASIRLQQLLT). Basic residues predominate over residues 629–638 (RTSSKKHRAS).

It belongs to the TRAFAC class myosin-kinesin ATPase superfamily. Kinesin family. Kinesin II subfamily. Component of the kinesin II motor complex, a heterotrimeric complex composed of kap-1, klp-11 and klp-20. Interacts (via C-terminus) with klp-11 (via C-terminus) to form a heterodimer. Furthermore, within the heterodimer, the C-termini of klp-20 and klp-11 interact to form a coiled coil (stalk) or tail domain, and this is necessary for association with kap-1, and kinesin II motor complex activity upon IFT cargo binding. Prior to cargo binding, the klp-11/klp-20 heterodimer is autoinhibited by the tail domain of the heterodimer, which folds onto the kinesin motor domain. Cargo binding to the heterodimer relieves the autoinhibition, and allows for an extended conformation of the tail domain, and function of the heterodimer.

It localises to the cell projection. The protein resides in the cilium. Its subcellular location is the cytoplasm. It is found in the cytoskeleton. Functionally, component of the kinesin II motor complex (composed of kap-1 and the heterodimeric motor proteins klp-11 and klp-20) which is required for intraflagellar transport (IFT). Heterodimerizes with klp-11 to form a 'processive' molecular motor upon IFT cargo binding, which, within the kinesin II motor complex, binds to and moves along microtubules in a unidirectional manner (without dissociation of the heterodimer), and in turn, is responsible for the IFT of cargo. Specifically, the kinesin II motor complex, together with the kinesin motor protein osm-3 moves along microtubules and is required for anterograde IFT along the middle segment of the sensory neuron cilia. In particular, the kinesin II motor complex delivers specific ciliary cargo proteins such as che-3 which are related to motility to ciliary tips. This is likely mediated by IFT complexes A and B. The protein is Kinesin-like protein klp-20 of Caenorhabditis elegans.